The following is a 465-amino-acid chain: Cysteine--tRNA ligase (465 aa).

Residue C30 coordinates Zn(2+). The 'HIGH' region signature appears at 32–42; that stretch reads ITVYDYCHVGH. 3 residues coordinate Zn(2+): C214, H239, and E243. Positions 271–275 match the 'KMSKS' region motif; sequence KMSKS. K274 contributes to the ATP binding site.

This sequence belongs to the class-I aminoacyl-tRNA synthetase family. Monomer. It depends on Zn(2+) as a cofactor.

It is found in the cytoplasm. It catalyses the reaction tRNA(Cys) + L-cysteine + ATP = L-cysteinyl-tRNA(Cys) + AMP + diphosphate. The protein is Cysteine--tRNA ligase of Burkholderia orbicola (strain MC0-3).